Reading from the N-terminus, the 160-residue chain is Large ribosomal subunit protein uL22c (160 aa).

It belongs to the universal ribosomal protein uL22 family. As to quaternary structure, part of the 50S ribosomal subunit.

It localises to the plastid. It is found in the chloroplast. Functionally, this protein binds specifically to 23S rRNA. The globular domain of the protein is located near the polypeptide exit tunnel on the outside of the subunit, while an extended beta-hairpin is found that lines the wall of the exit tunnel in the center of the 70S ribosome. The sequence is that of Large ribosomal subunit protein uL22c (rpl22) from Crucihimalaya wallichii (Rock-cress).